The primary structure comprises 245 residues: Carbohydrate deacetylase (245 aa).

Mg(2+)-binding residues include His59 and His125.

It belongs to the YdjC deacetylase family. Homodimer. Mg(2+) serves as cofactor.

Functionally, probably catalyzes the deacetylation of acetylated carbohydrates an important step in the degradation of oligosaccharides. This Listeria monocytogenes serotype 4a (strain HCC23) protein is Carbohydrate deacetylase.